The sequence spans 298 residues: ATP synthase gamma chain (298 aa).

The protein belongs to the ATPase gamma chain family. As to quaternary structure, F-type ATPases have 2 components, CF(1) - the catalytic core - and CF(0) - the membrane proton channel. CF(1) has five subunits: alpha(3), beta(3), gamma(1), delta(1), epsilon(1). CF(0) has three main subunits: a, b and c.

The protein resides in the cell membrane. Its function is as follows. Produces ATP from ADP in the presence of a proton gradient across the membrane. The gamma chain is believed to be important in regulating ATPase activity and the flow of protons through the CF(0) complex. The chain is ATP synthase gamma chain from Frankia casuarinae (strain DSM 45818 / CECT 9043 / HFP020203 / CcI3).